The chain runs to 59 residues: Large ribosomal subunit protein uL30 (59 aa).

It belongs to the universal ribosomal protein uL30 family. In terms of assembly, part of the 50S ribosomal subunit.

This is Large ribosomal subunit protein uL30 from Herminiimonas arsenicoxydans.